Reading from the N-terminus, the 120-residue chain is uncharacterized protein (120 aa).

To B.subtilis XkdH.

This is an uncharacterized protein from Bacillus subtilis (strain 168).